The following is a 1128-amino-acid chain: Large proline-rich protein BAG6 (1128 aa).

Met-1 is subject to N-acetylmethionine. Residues Leu-17 to Thr-92 form the Ubiquitin-like domain. Disordered regions lie at residues Arg-87–Asp-126, Cys-185–Ser-267, Val-380–His-435, Ile-456–Gly-523, and Pro-555–Asp-598. Residues Pro-95–Thr-108 show a composition bias toward low complexity. A Phosphoserine modification is found at Ser-96. Residue Thr-117 is modified to Phosphothreonine. Residues Ser-189–Pro-201 are compositionally biased toward polar residues. Repeat 1 spans residues Arg-236–His-265. Residues Arg-236 to Met-630 form a 4 X 29 AA approximate repeats region. Low complexity predominate over residues Ser-238–Ser-247. Pro residues-rich tracts occupy residues Gly-248–Ala-257 and Arg-388–Pro-402. Low complexity predominate over residues Gly-403–Ser-412. Repeat 2 spans residues Pro-410 to Val-438. 2 stretches are compositionally biased toward pro residues: residues Ala-422–Ala-433 and Pro-502–Pro-515. A compositionally biased stretch (low complexity) spans Ala-564–Pro-581. Repeat copies occupy residues Ser-569–Ala-596 and Ser-602–Met-630. The segment covering Pro-583 to Pro-594 has biased composition (pro residues). Disordered stretches follow at residues Gln-648–Pro-689 and Val-939–Pro-1128. Over residues Pro-652–Pro-677 the composition is skewed to pro residues. Over residues Pro-678–Gly-688 the composition is skewed to gly residues. Residues Ser-960 and Ser-969 each carry the phosphoserine modification. Low complexity predominate over residues Ala-999–Pro-1016. The tract at residues Trp-1006–Asp-1036 is required for interaction with GET4. A Nuclear localization site motif is present at residues Ala-1008 to Met-1050. The interval Ile-1018–Pro-1128 is sufficient for the delivery of client proteins to the endoplasmic reticulum. A Phosphothreonine modification is found at Thr-1049. A BAG-similar domain, required and sufficient for interaction with UBL4A region spans residues Gly-1054–Asn-1111. Residues Ala-1062 to Ala-1072 show a composition bias toward low complexity. 2 positions are modified to phosphoserine: Ser-1077 and Ser-1113.

As to quaternary structure, component of the BAG6/BAT3 complex, also named BAT3 complex, at least composed of BAG6, UBL4A and GET4/TRC35. Interacts with GET4; the interaction is direct and localizes BAG6 in the cytosol. Interacts with UBL4A; the interaction is direct and required for UBL4A protein stability. Interacts with AIFM1. Interacts with HSPA2. Interacts with CTCFL. Interacts with p300/EP300. Interacts (via ubiquitin-like domain) with RNF126; required for BAG6-dependent ubiquitination of proteins mislocalized to the cytosol. Interacts (via ubiquitin-like domain) with SGTA; SGTA competes with RNF126 by binding the same region of BAG6, thereby promoting deubiquitination of BAG6-target proteins and rescuing them from degradation. Interacts with ricin A chain. Interacts with VCP and AMFR; both form the VCP/p97-AMFR/gp78 complex. Interacts with SYVN1. Interacts with USP13; the interaction is direct and may mediate UBL4A deubiquitination. Interacts with ZFAND2B. Interacts with KPNA2. Interacts with UBQLN4. Post-translationally, ricin can induce a cleavage by the caspase CASP3. The released C-terminal peptide induces apoptosis.

It localises to the cytoplasm. The protein resides in the cytosol. The protein localises to the nucleus. Its subcellular location is the secreted. It is found in the extracellular exosome. ATP-independent molecular chaperone preventing the aggregation of misfolded and hydrophobic patches-containing proteins. Functions as part of a cytosolic protein quality control complex, the BAG6/BAT3 complex, which maintains these client proteins in a soluble state and participates in their proper delivery to the endoplasmic reticulum or alternatively can promote their sorting to the proteasome where they undergo degradation. The BAG6/BAT3 complex is involved in the post-translational delivery of tail-anchored/type II transmembrane proteins to the endoplasmic reticulum membrane. Recruited to ribosomes, it interacts with the transmembrane region of newly synthesized tail-anchored proteins and together with SGTA and ASNA1 mediates their delivery to the endoplasmic reticulum. Client proteins that cannot be properly delivered to the endoplasmic reticulum are ubiquitinated by RNF126, an E3 ubiquitin-protein ligase associated with BAG6 and are sorted to the proteasome. SGTA which prevents the recruitment of RNF126 to BAG6 may negatively regulate the ubiquitination and the proteasomal degradation of client proteins. Similarly, the BAG6/BAT3 complex also functions as a sorting platform for proteins of the secretory pathway that are mislocalized to the cytosol either delivering them to the proteasome for degradation or to the endoplasmic reticulum. The BAG6/BAT3 complex also plays a role in the endoplasmic reticulum-associated degradation (ERAD), a quality control mechanism that eliminates unwanted proteins of the endoplasmic reticulum through their retrotranslocation to the cytosol and their targeting to the proteasome. It maintains these retrotranslocated proteins in an unfolded yet soluble state condition in the cytosol to ensure their proper delivery to the proteasome. BAG6 is also required for selective ubiquitin-mediated degradation of defective nascent chain polypeptides by the proteasome. In this context, it may participate in the production of antigenic peptides and play a role in antigen presentation in immune response. BAG6 is also involved in endoplasmic reticulum stress-induced pre-emptive quality control, a mechanism that selectively attenuates the translocation of newly synthesized proteins into the endoplasmic reticulum and reroutes them to the cytosol for proteasomal degradation. BAG6 may ensure the proper degradation of these proteins and thereby protects the endoplasmic reticulum from protein overload upon stress. By inhibiting the polyubiquitination and subsequent proteasomal degradation of HSPA2 it may also play a role in the assembly of the synaptonemal complex during spermatogenesis. Also positively regulates apoptosis by interacting with and stabilizing the proapoptotic factor AIFM1. By controlling the steady-state expression of the IGF1R receptor, indirectly regulates the insulin-like growth factor receptor signaling pathway. Its function is as follows. Involved in DNA damage-induced apoptosis: following DNA damage, accumulates in the nucleus and forms a complex with p300/EP300, enhancing p300/EP300-mediated p53/TP53 acetylation leading to increase p53/TP53 transcriptional activity. When nuclear, may also act as a component of some chromatin regulator complex that regulates histone 3 'Lys-4' dimethylation (H3K4me2). In terms of biological role, released extracellularly via exosomes, it is a ligand of the natural killer/NK cells receptor NCR3 and stimulates NK cells cytotoxicity. It may thereby trigger NK cells cytotoxicity against neighboring tumor cells and immature myeloid dendritic cells (DC). Functionally, may mediate ricin-induced apoptosis. The protein is Large proline-rich protein BAG6 of Sus scrofa (Pig).